The sequence spans 183 residues: 2-hydroxy-1,4-benzoquinone reductase (183 aa).

Residues 11 to 18, 77 to 80, and Ser113 each bind FMN; these read SLRRDSFN and EYNR.

The protein belongs to the SsuE family. Homotetramer. The cofactor is FMN.

It carries out the reaction 2-hydroxy-1,4-benzoquinone + NADH + 2 H(+) = benzene-1,2,4-triol + NAD(+). Involved in the metabolism of 4-aminophenol. Catalyzes the reduction of the auto-oxidation product 2-hydroxy-1,4-benzoquinone back to hydroxyquinol. Has a broad substrate specificity toward benzoquinones, converting them to the corresponding 1,4-benzenediols. This is 2-hydroxy-1,4-benzoquinone reductase from Burkholderia sp.